Reading from the N-terminus, the 600-residue chain is Alpha-N-acetylgalactosaminide alpha-2,6-sialyltransferase 1 (600 aa).

Topologically, residues 1-14 are cytoplasmic; the sequence is MRSCLWRCRHLSQG. Residues 15–35 traverse the membrane as a helical; Signal-anchor for type II membrane protein segment; the sequence is VQWSLLLAVLVFFLFALPSFI. Topologically, residues 36 to 600 are lumenal; the sequence is KEPQTKPSRH…PGPGTAKAKN (565 aa). Disordered regions lie at residues 38–191 and 208–248; these read PQTK…AATT and GAVS…TQRN. The span at 46-55 shows a compositional bias: basic and acidic residues; the sequence is QRTENIKERS. 3 stretches are compositionally biased toward polar residues: residues 84-94, 151-179, and 209-219; these read NALNTQTQPKA, TEAQ…ASRT, and AVSTRTRQKGV. 2 cysteine pairs are disulfide-bonded: C279/C362 and C365/C533. N-linked (GlcNAc...) asparagine glycans are attached at residues N300, N311, N331, N375, and N460.

Belongs to the glycosyltransferase 29 family. Post-translationally, glycosylated; autosialylated. In terms of tissue distribution, expression is restricted to the gastrointestinal tract. Highly expressed in goblet cells. Also expressed in various tumor cells.

It is found in the golgi apparatus membrane. The enzyme catalyses a beta-D-galactosyl-(1-&gt;3)-N-acetyl-alpha-D-galactosaminyl derivative + CMP-N-acetyl-beta-neuraminate = a beta-D-galactosyl-(1-&gt;3)-[N-acetyl-alpha-neuraminyl-(2-&gt;6)]-N-acetyl-alpha-D-galactosaminyl derivative + CMP + H(+). It carries out the reaction a 3-O-[N-acetyl-alpha-D-galactosaminyl]-L-seryl-[protein] + CMP-N-acetyl-beta-neuraminate = a 3-O-[N-acetyl-alpha-neuraminosyl-(2-&gt;6)-N-acetyl-alpha-D-galactosaminyl]-L-seryl-[protein] + CMP + H(+). It catalyses the reaction a 3-O-[N-acetyl-alpha-D-galactosaminyl]-L-threonyl-[protein] + CMP-N-acetyl-beta-neuraminate = a 3-O-[N-acetyl-alpha-neuraminosyl-(2-&gt;6)-N-acetyl-alpha-D-galactosaminyl]-L-threonyl-[protein] + CMP + H(+). The catalysed reaction is a 3-O-[beta-D-galactosyl-(1-&gt;3)-N-acetyl-alpha-D-galactosaminyl]-L-seryl-[protein] + CMP-N-acetyl-beta-neuraminate = a 3-O-{beta-D-galactosyl-(1-&gt;3)-[N-acetyl-alpha-neuraminosyl-(2-&gt;6)]-N-acetyl-alpha-D-galactosaminyl}-L-seryl-[protein] + CMP + H(+). The enzyme catalyses a 3-O-[beta-D-galactosyl-(1-&gt;3)-N-acetyl-alpha-D-galactosaminyl]-L-threonyl-[protein] + CMP-N-acetyl-beta-neuraminate = a 3-O-{beta-D-galactosyl-(1-&gt;3)-[N-acetyl-alpha-neuraminosyl-(2-&gt;6)]-N-acetyl-alpha-D-galactosaminyl}-L-threonyl-[protein] + CMP + H(+). It carries out the reaction a 3-O-[N-acetyl-alpha-neuraminyl-(2-&gt;3)-beta-D-galactosyl-(1-&gt;3)-N-acetyl-alpha-D-galactosaminyl]-L-threonyl-[protein] + CMP-N-acetyl-beta-neuraminate = a 3-O-{alpha-Neu5Ac-(2-&gt;3)-beta-D-Gal-(1-&gt;3)-[alpha-Neu5Ac-(2-&gt;6)]-alpha-D-GalNAc}-L-threonyl-[protein] + CMP + H(+). It participates in protein modification; protein glycosylation. In terms of biological role, protein sialyltransferase specifically expressed in goblet cells that plays a key role in intestinal host-commensal homeostasis. Conjugates sialic acid with an alpha-2-6 linkage to N-acetylgalactosamine (GalNAc) glycan chains linked to serine or threonine in glycoproteins. Catalyzes the formation of the sialyl-Tn (S-Tn) antigen, an antigen found in intestinal goblet cells, as well as ulcerative colitis (UC) and various cancers. Protein sialylation in globlet cells is essential for mucus integrity and is required to protect the intestinal mucus against excessive bacterial proteolytic degradation. This is Alpha-N-acetylgalactosaminide alpha-2,6-sialyltransferase 1 from Homo sapiens (Human).